The primary structure comprises 195 residues: Shikimate kinase (195 aa).

21–26 (GTGKTS) is a binding site for ATP. Thr25 is a Mg(2+) binding site. 3 residues coordinate substrate: Asp43, Arg67, and Gly89. Positions 128-148 (REQRPSFSGKASTEISEETMR) are disordered. Arg131 serves as a coordination point for ATP. Over residues 132 to 141 (PSFSGKASTE) the composition is skewed to polar residues. Arg158 contributes to the substrate binding site.

It belongs to the shikimate kinase family. As to quaternary structure, monomer. It depends on Mg(2+) as a cofactor.

It localises to the cytoplasm. The catalysed reaction is shikimate + ATP = 3-phosphoshikimate + ADP + H(+). The protein operates within metabolic intermediate biosynthesis; chorismate biosynthesis; chorismate from D-erythrose 4-phosphate and phosphoenolpyruvate: step 5/7. Catalyzes the specific phosphorylation of the 3-hydroxyl group of shikimic acid using ATP as a cosubstrate. The polypeptide is Shikimate kinase (Syntrophus aciditrophicus (strain SB)).